A 425-amino-acid polypeptide reads, in one-letter code: Protein CLP1 homolog (425 aa).

ATP-binding positions include E18, K59, and 121-126 (DVGKST).

This sequence belongs to the Clp1 family. Clp1 subfamily.

Its subcellular location is the nucleus. In terms of biological role, required for endonucleolytic cleavage during polyadenylation-dependent pre-mRNA 3'-end formation. The chain is Protein CLP1 homolog (cbc) from Drosophila persimilis (Fruit fly).